The following is a 346-amino-acid chain: N(4)-(beta-N-acetylglucosaminyl)-L-asparaginase (346 aa).

The signal sequence occupies residues 1 to 23 (MARKSNLPVLLVPFLLCQALVRC). Ser24 is modified (blocked amino end (Ser)). An N-linked (GlcNAc...) asparagine glycan is attached at Asn38. 2 cysteine pairs are disulfide-bonded: Cys64–Cys69 and Cys163–Cys179. Thr206 (nucleophile) is an active-site residue. Residues 234–237 (RVGD) and 257–260 (TGNG) contribute to the substrate site. A disulfide bond links Cys286 and Cys306. A glycan (N-linked (GlcNAc...) asparagine) is linked at Asn308. Cysteines 317 and 345 form a disulfide.

This sequence belongs to the Ntn-hydrolase family. As to quaternary structure, heterotetramer of two alpha and two beta chains arranged as a dimer of alpha/beta heterodimers. Post-translationally, cleaved into an alpha and beta chain by autocatalysis; this activates the enzyme. The N-terminal residue of the beta subunit is responsible for the nucleophile hydrolase activity. In terms of processing, N-glycosylated.

The protein localises to the lysosome. It carries out the reaction N(4)-(beta-N-acetyl-D-glucosaminyl)-L-asparagine + H2O = N-acetyl-beta-D-glucosaminylamine + L-aspartate + H(+). Cleaves the GlcNAc-Asn bond which joins oligosaccharides to the peptide of asparagine-linked glycoproteins. In Homo sapiens (Human), this protein is N(4)-(beta-N-acetylglucosaminyl)-L-asparaginase (AGA).